We begin with the raw amino-acid sequence, 629 residues long: Methionine--tRNA ligase (629 aa).

Residues 10–20 (YYVNSEPHIGS) carry the 'HIGH' region motif. Positions 125, 128, 146, and 149 each coordinate Zn(2+). Positions 297 to 301 (KISKS) match the 'KMSKS' region motif. Residue K300 participates in ATP binding. In terms of domain architecture, tRNA-binding spans 529–629 (DFSKVDLRIA…GEITPGAKVS (101 aa)).

Belongs to the class-I aminoacyl-tRNA synthetase family. MetG type 2A subfamily. As to quaternary structure, homodimer. Requires Zn(2+) as cofactor.

The protein resides in the cytoplasm. It catalyses the reaction tRNA(Met) + L-methionine + ATP = L-methionyl-tRNA(Met) + AMP + diphosphate. Is required not only for elongation of protein synthesis but also for the initiation of all mRNA translation through initiator tRNA(fMet) aminoacylation. In Thermotoga maritima (strain ATCC 43589 / DSM 3109 / JCM 10099 / NBRC 100826 / MSB8), this protein is Methionine--tRNA ligase (metG).